The chain runs to 352 residues: Protein RecA (352 aa).

66 to 73 (GPESSGKT) lines the ATP pocket. The segment at 330 to 352 (TKDDSKVATVDKANEEQAAEPVQ) is disordered.

The protein belongs to the RecA family.

Its subcellular location is the cytoplasm. Can catalyze the hydrolysis of ATP in the presence of single-stranded DNA, the ATP-dependent uptake of single-stranded DNA by duplex DNA, and the ATP-dependent hybridization of homologous single-stranded DNAs. It interacts with LexA causing its activation and leading to its autocatalytic cleavage. The protein is Protein RecA of Psychrobacter cryohalolentis (strain ATCC BAA-1226 / DSM 17306 / VKM B-2378 / K5).